The following is a 453-amino-acid chain: MAFSVVILAAGKGTRMKSSMPKVLHPIGAKPMVQRIIDTVHQLGAASINLVYGHQAEQLQQALGHNALNWCLQAEQLGTGHAVQQAVPHISDDEDVLILVGDAPLIKANTLHNLLQVKNNADVALLTVNVADPTGMGRIIRQGDNVTAIVEHKDASDAQRQICEINTGMMVLNGKDLKRWLANLNSNNAQGEFYLTDVIEMAANEGKVIKAAQPNSEIEVEGINNRKQLAAIERAFQFEQAQELMMQGVSLLDPHRFDLRGDIIVGQDISIDVNVVIEGTVKIGSNVTIGPNCILKDCEIADGATIEANSMLDQAIVGENCSVGPYARLRPGAVMHENARVGNFVEMKKTTLGKGSKANHLTYLGDTTVGIGANIGAGTITCNYDGVNKSKTIIGDGAFIGSNSALVAPVQIGNMATVGAGSVVTKTVADQELAIARAKQRNVSGWQRPTKPE.

The segment at Met-1–Arg-226 is pyrophosphorylase. UDP-N-acetyl-alpha-D-glucosamine contacts are provided by residues Leu-8 to Gly-11, Lys-22, Gln-73, and Gly-78 to Thr-79. Residue Asp-102 participates in Mg(2+) binding. 4 residues coordinate UDP-N-acetyl-alpha-D-glucosamine: Gly-137, Glu-151, Asn-166, and Asn-224. Mg(2+) is bound at residue Asn-224. The linker stretch occupies residues Lys-227–Gln-247. The tract at residues Gly-248–Glu-453 is N-acetyltransferase. Arg-330 and Lys-348 together coordinate UDP-N-acetyl-alpha-D-glucosamine. Catalysis depends on His-360, which acts as the Proton acceptor. UDP-N-acetyl-alpha-D-glucosamine-binding residues include Tyr-363 and Asn-374. Acetyl-CoA-binding positions include Ala-377, Asn-383–Tyr-384, Ser-402, Ala-420, and Arg-437.

It in the N-terminal section; belongs to the N-acetylglucosamine-1-phosphate uridyltransferase family. In the C-terminal section; belongs to the transferase hexapeptide repeat family. Homotrimer. Mg(2+) is required as a cofactor.

It is found in the cytoplasm. The catalysed reaction is alpha-D-glucosamine 1-phosphate + acetyl-CoA = N-acetyl-alpha-D-glucosamine 1-phosphate + CoA + H(+). It catalyses the reaction N-acetyl-alpha-D-glucosamine 1-phosphate + UTP + H(+) = UDP-N-acetyl-alpha-D-glucosamine + diphosphate. The protein operates within nucleotide-sugar biosynthesis; UDP-N-acetyl-alpha-D-glucosamine biosynthesis; N-acetyl-alpha-D-glucosamine 1-phosphate from alpha-D-glucosamine 6-phosphate (route II): step 2/2. It functions in the pathway nucleotide-sugar biosynthesis; UDP-N-acetyl-alpha-D-glucosamine biosynthesis; UDP-N-acetyl-alpha-D-glucosamine from N-acetyl-alpha-D-glucosamine 1-phosphate: step 1/1. It participates in bacterial outer membrane biogenesis; LPS lipid A biosynthesis. In terms of biological role, catalyzes the last two sequential reactions in the de novo biosynthetic pathway for UDP-N-acetylglucosamine (UDP-GlcNAc). The C-terminal domain catalyzes the transfer of acetyl group from acetyl coenzyme A to glucosamine-1-phosphate (GlcN-1-P) to produce N-acetylglucosamine-1-phosphate (GlcNAc-1-P), which is converted into UDP-GlcNAc by the transfer of uridine 5-monophosphate (from uridine 5-triphosphate), a reaction catalyzed by the N-terminal domain. The polypeptide is Bifunctional protein GlmU (Pseudoalteromonas atlantica (strain T6c / ATCC BAA-1087)).